An 80-amino-acid polypeptide reads, in one-letter code: Large ribosomal subunit protein bL31B (80 aa).

This sequence belongs to the bacterial ribosomal protein bL31 family. Type B subfamily. As to quaternary structure, part of the 50S ribosomal subunit.

In Methylobacillus flagellatus (strain ATCC 51484 / DSM 6875 / VKM B-1610 / KT), this protein is Large ribosomal subunit protein bL31B.